The following is a 1499-amino-acid chain: Phospholipid-transporting ATPase VA (1499 aa).

Residues 1–53 (MEREPAGTEEPGPPGRRRRREGRTRTVRSNLLPPPGAEDPAAGAAKGERRRRR) form a disordered region. At 1–86 (MEREPAGTEE…KNLFEQFHRP (86 aa)) the chain is on the cytoplasmic side. Basic residues predominate over residues 15–26 (GRRRRREGRTRT). The chain crosses the membrane as a helical span at residues 87–106 (ANVYFVFIALLNFVPAVNAF). Over 107-110 (QPGL) the chain is Exoplasmic loop. The helical transmembrane segment at 111–128 (ALAPVLFILAITAFRDLW) threads the bilayer. Residues 129–309 (EDYSRHRSDH…SKLERQMNCD (181 aa)) are Cytoplasmic-facing. The chain crosses the membrane as a helical span at residues 310–332 (VLWCVLLLVCMSLFSAVGHGLWI). Topologically, residues 333–362 (WRYQEKKSLFYVPKSDGSSLSPVTAAVYSF) are exoplasmic loop. A helical transmembrane segment spans residues 363 to 384 (LTMIIVLQVLIPISLYVSIEIV). Topologically, residues 385–1087 (KACQVYFINQ…GHWCYSRLAN (703 aa)) are cytoplasmic. The active-site 4-aspartylphosphate intermediate is the Asp427. Positions 427, 428, and 429 each coordinate ATP. Asp427 is a binding site for Mg(2+). Thr429 contacts Mg(2+). The segment at 464-531 (ADSEEEEVVP…AFSSPMEKDI (68 aa)) is disordered. Ser466 is subject to Phosphoserine. Polar residues predominate over residues 477-499 (SVSQRGSIGSHQSVRVVHRTQST). Residues Glu700, Phe742, Lys766, Arg809, Thr889, Gly890, Asp891, Arg1005, and Lys1011 each contribute to the ATP site. Residue Asp1031 coordinates Mg(2+). ATP-binding residues include Asn1034 and Asp1035. Residue Asp1035 coordinates Mg(2+). Residues 1088-1108 (MVLYFFYKNTMFVGLLFWFQF) form a helical membrane-spanning segment. Over 1109 to 1119 (FCGFSASTMID) the chain is Exoplasmic loop. The chain crosses the membrane as a helical span at residues 1120–1140 (QWYLIFFNLLFSSLPPLVTGV). The Cytoplasmic portion of the chain corresponds to 1141 to 1170 (LDRDVPANVLLTNPQLYKSGQNMEEYRPRT). Residues 1171–1192 (FWFNMADAAFQSLVCFSIPYLA) traverse the membrane as a helical segment. Over 1193 to 1199 (YYDSNVD) the chain is Exoplasmic loop. A helical transmembrane segment spans residues 1200–1222 (LFTWGTPIVTIALLTFLLHLGIE). At 1223-1228 (TKTWTW) the chain is on the cytoplasmic side. A helical membrane pass occupies residues 1229–1249 (LNWITCGFSVLLFFTVALIYN). Topologically, residues 1250–1267 (ASCATCYPPSNPYWTMQA) are exoplasmic loop. Residues 1268–1292 (LLGDPVFYLTCLMTPVAALLPRLFF) form a helical membrane-spanning segment. Residues 1293 to 1499 (RSLQGRVFPT…LIGASSRRSQ (207 aa)) are Cytoplasmic-facing. Disordered regions lie at residues 1311-1356 (TRKS…PSWH) and 1464-1499 (DGQAGRGLPVQPHSGRSGLQGPDHRLLIGASSRRSQ). Residues 1330 to 1340 (LPKDSGTEHSS) are compositionally biased toward basic and acidic residues. Over residues 1341–1356 (GRTVKTSVPLSQPSWH) the composition is skewed to polar residues.

Belongs to the cation transport ATPase (P-type) (TC 3.A.3) family. Type IV subfamily. In terms of assembly, component of a P4-ATPase flippase complex which consists of a catalytic alpha subunit ATP10A and an accessory beta subunit TMEM30A. Mg(2+) serves as cofactor. Post-translationally, autophosphorylated at the conserved aspartate of the P-type ATPase signature sequence. In terms of tissue distribution, widely expressed, with highest levels in kidney, followed by lung, brain, prostate, testis, ovary and small intestine.

Its subcellular location is the cell membrane. It localises to the endoplasmic reticulum membrane. It catalyses the reaction ATP + H2O + phospholipidSide 1 = ADP + phosphate + phospholipidSide 2.. It carries out the reaction a 1,2-diacyl-sn-glycero-3-phosphocholine(out) + ATP + H2O = a 1,2-diacyl-sn-glycero-3-phosphocholine(in) + ADP + phosphate + H(+). The catalysed reaction is a beta-D-glucosyl-(1&lt;-&gt;1')-N-acylsphing-4-enine(out) + ATP + H2O = a beta-D-glucosyl-(1&lt;-&gt;1')-N-acylsphing-4-enine(in) + ADP + phosphate + H(+). With respect to regulation, inhibited under hypotonic conditions. In terms of biological role, catalytic component of P4-ATPase flippase complex, which catalyzes the hydrolysis of ATP coupled to the transport of phosphatidylcholine (PC) from the outer to the inner leaflet of the plasma membrane. Initiates inward plasma membrane bending and recruitment of Bin/amphiphysin/Rvs (BAR) domain-containing proteins involved in membrane tubulation and cell trafficking. Facilitates ITGB1/beta1 integrin endocytosis, delaying cell adhesion and cell spreading on extracellular matrix. Has low flippase activity toward glucosylceramide (GlcCer). The sequence is that of Phospholipid-transporting ATPase VA from Homo sapiens (Human).